Reading from the N-terminus, the 185-residue chain is MAKYDKADLERRMKGAVESLRGDLSGLRTGRANTALLDPIVVEVYGSHMPLAQVATVSAPEPRLLSVQVWDKSNVTPVEKAIRSAGLGLNPISDGNTLRLPIPDLTEERRKELAKLASKYAENARIAIRNVRRDGMDALKADESKKEISEDERKRAETDLQKLTDDIIKQADEAAAAKEKEILGK.

The protein belongs to the RRF family.

The protein resides in the cytoplasm. Responsible for the release of ribosomes from messenger RNA at the termination of protein biosynthesis. May increase the efficiency of translation by recycling ribosomes from one round of translation to another. The sequence is that of Ribosome-recycling factor from Novosphingobium aromaticivorans (strain ATCC 700278 / DSM 12444 / CCUG 56034 / CIP 105152 / NBRC 16084 / F199).